The following is a 673-amino-acid chain: MSKPFKLNSAFKPSGDQPDAIRRLEEGLEDGLAHQTLLGVTGSGKTFTIANVIADLQRPTMVLAPNKTLAAQLYGEMKEFFPENAVEYFVSYYDYYQPEAYVPSSDTFIEKDASVNEHIEQMRLSATKALLERRDVVVVASVSAIYGLGDPDLYLKMMLHLTVGMLIDQRAILRRLAELQYTRNDQAFQRGTFRVRGEVIDIFPAESDDIALRVELFDEEVERLSLFDPLTGQVESTVPRYTIYPKTHYVTPRERILQAMEEIKDELADRRKVLLANNKLLEEQRLSQRTQFDLEMMNELGYCSGIENYSRFLSGRGPGEPPPTLFDYLPADGLLVVDESHVTIPQIGGMYRGDRARKETLVEYGFRLPSALDNRPLKFEEFEALAPQTIYVSATPGNYELEKSGDEVVDQVVRPTGLLDPIIEVRPVATQVDDLLSEIRQRAAINERVLVTTLTKRMAEDLTEYLEEHGERVRYLHSDIDTVERMEIIRDLRLGEFDVLVGINLLREGLDMPEVSLVAILDADKEGFLRSERSLIQTIGRAARNVNGKAILYGDKITPSMAKAIGETERRREKQQKYNEEHGITPQGLNKKVVDILALGQNIAKTKAKGKGKGRSTAKAGIVELDMTPKALQQKIHELEEQMMQHAQNLEFEEAAQIRDQLHQLRELFIAAS.

The Helicase ATP-binding domain occupies 26–414; the sequence is EGLEDGLAHQ…GDEVVDQVVR (389 aa). 39 to 46 is a binding site for ATP; sequence GVTGSGKT. Positions 92–115 match the Beta-hairpin motif; sequence YYDYYQPEAYVPSSDTFIEKDASV. The Helicase C-terminal domain occupies 431-597; it reads QVDDLLSEIR…GLNKKVVDIL (167 aa). The 36-residue stretch at 633 to 668 folds into the UVR domain; the sequence is QQKIHELEEQMMQHAQNLEFEEAAQIRDQLHQLREL.

The protein belongs to the UvrB family. In terms of assembly, forms a heterotetramer with UvrA during the search for lesions. Interacts with UvrC in an incision complex.

It localises to the cytoplasm. Its function is as follows. The UvrABC repair system catalyzes the recognition and processing of DNA lesions. A damage recognition complex composed of 2 UvrA and 2 UvrB subunits scans DNA for abnormalities. Upon binding of the UvrA(2)B(2) complex to a putative damaged site, the DNA wraps around one UvrB monomer. DNA wrap is dependent on ATP binding by UvrB and probably causes local melting of the DNA helix, facilitating insertion of UvrB beta-hairpin between the DNA strands. Then UvrB probes one DNA strand for the presence of a lesion. If a lesion is found the UvrA subunits dissociate and the UvrB-DNA preincision complex is formed. This complex is subsequently bound by UvrC and the second UvrB is released. If no lesion is found, the DNA wraps around the other UvrB subunit that will check the other stand for damage. The polypeptide is UvrABC system protein B (Salmonella typhi).